We begin with the raw amino-acid sequence, 136 residues long: Nucleoside diphosphate kinase (136 aa).

Residues Lys-10, Phe-58, Arg-86, Thr-92, Arg-104, and Asn-114 each coordinate ATP. His-117 (pros-phosphohistidine intermediate) is an active-site residue.

Belongs to the NDK family. In terms of assembly, homohexamer. It depends on Mg(2+) as a cofactor.

It localises to the cytoplasm. The enzyme catalyses a 2'-deoxyribonucleoside 5'-diphosphate + ATP = a 2'-deoxyribonucleoside 5'-triphosphate + ADP. The catalysed reaction is a ribonucleoside 5'-diphosphate + ATP = a ribonucleoside 5'-triphosphate + ADP. In terms of biological role, major role in the synthesis of nucleoside triphosphates other than ATP. The ATP gamma phosphate is transferred to the NDP beta phosphate via a ping-pong mechanism, using a phosphorylated active-site intermediate. The sequence is that of Nucleoside diphosphate kinase from Mycobacterium bovis (strain ATCC BAA-935 / AF2122/97).